Reading from the N-terminus, the 76-residue chain is Omega-scoloptoxin(13)-Ssm2a (76 aa).

A signal peptide spans 1–22 (MAYIYALIFAIVVCMNTDVIQA).

In terms of processing, contains 4 disulfide bonds. As to expression, expressed by the venom gland.

It localises to the secreted. Functionally, inhibits voltage-gated calcium channel (Cav) currents in DRG neurons (IC(50)=1590 nM). The chain is Omega-scoloptoxin(13)-Ssm2a from Scolopendra mutilans (Chinese red-headed centipede).